A 921-amino-acid polypeptide reads, in one-letter code: Probable serine/threonine-protein kinase DDB_G0275165 (921 aa).

In terms of domain architecture, Protein kinase spans 23–277; it reads FDPLSIIGSG…SNILGLLEYI (255 aa). ATP-binding positions include 29–37 and K50; that span reads IGSGGFGKV. The Proton acceptor role is filled by D147. 8 disordered regions span residues 289-453, 465-492, 530-571, 583-653, 671-698, 737-813, 833-858, and 877-921; these read DYEP…SFPR, RGEE…NEED, RPWN…SDSN, NPTP…PTTI, STAT…SNNN, IQPL…SRSL, SSQQ…TSQF, and FEKS…KPKK. Low complexity-rich tracts occupy residues 310 to 352, 400 to 412, and 429 to 445; these read NNNN…NNNN, SNIN…NNSN, and NING…NNNN. Low complexity-rich tracts occupy residues 539 to 550 and 583 to 638; these read NNNNKNNNNNEK and NPTP…SLSS. The span at 643–653 shows a compositional bias: polar residues; sequence PQSTYKVPTTI. 3 stretches are compositionally biased toward low complexity: residues 748 to 775, 842 to 857, and 892 to 910; these read TVAA…PTST, QPSS…PTSQ, and TSSS…PSSP.

Belongs to the protein kinase superfamily. TKL Ser/Thr protein kinase family.

It catalyses the reaction L-seryl-[protein] + ATP = O-phospho-L-seryl-[protein] + ADP + H(+). The enzyme catalyses L-threonyl-[protein] + ATP = O-phospho-L-threonyl-[protein] + ADP + H(+). The chain is Probable serine/threonine-protein kinase DDB_G0275165 from Dictyostelium discoideum (Social amoeba).